Here is a 105-residue protein sequence, read N- to C-terminus: Putative pterin-4-alpha-carbinolamine dehydratase (105 aa).

The protein belongs to the pterin-4-alpha-carbinolamine dehydratase family.

The catalysed reaction is (4aS,6R)-4a-hydroxy-L-erythro-5,6,7,8-tetrahydrobiopterin = (6R)-L-erythro-6,7-dihydrobiopterin + H2O. The polypeptide is Putative pterin-4-alpha-carbinolamine dehydratase (Sinorhizobium fredii (strain NBRC 101917 / NGR234)).